Reading from the N-terminus, the 232-residue chain is uncharacterized protein (232 aa).

In terms of domain architecture, Autotransporter spans 1–232 (MIIKKSGGRW…LYTMGVSARF (232 aa)).

This is an uncharacterized protein from Escherichia coli (strain K12).